The primary structure comprises 57 residues: uncharacterized protein (57 aa).

Residues 34 to 54 (AALLDAAALVVIPGLLTAAAV) traverse the membrane as a helical segment.

Its subcellular location is the membrane. This is an uncharacterized protein from Dictyostelium discoideum (Social amoeba).